Here is a 466-residue protein sequence, read N- to C-terminus: Cysteine--tRNA ligase (466 aa).

Zn(2+) is bound at residue Cys28. Residues 30–40 (PTVYNYIHIGN) carry the 'HIGH' region motif. 3 residues coordinate Zn(2+): Cys208, His233, and Glu237. Residues 265–269 (KMSKS) carry the 'KMSKS' region motif. Position 268 (Lys268) interacts with ATP.

It belongs to the class-I aminoacyl-tRNA synthetase family. Monomer. It depends on Zn(2+) as a cofactor.

It localises to the cytoplasm. The catalysed reaction is tRNA(Cys) + L-cysteine + ATP = L-cysteinyl-tRNA(Cys) + AMP + diphosphate. The protein is Cysteine--tRNA ligase of Staphylococcus aureus (strain Mu3 / ATCC 700698).